We begin with the raw amino-acid sequence, 146 residues long: D-aminoacyl-tRNA deacylase (146 aa).

The Gly-cisPro motif, important for rejection of L-amino acids signature appears at 137–138; the sequence is GP.

The protein belongs to the DTD family. As to quaternary structure, homodimer.

It is found in the cytoplasm. It catalyses the reaction glycyl-tRNA(Ala) + H2O = tRNA(Ala) + glycine + H(+). The catalysed reaction is a D-aminoacyl-tRNA + H2O = a tRNA + a D-alpha-amino acid + H(+). Its function is as follows. An aminoacyl-tRNA editing enzyme that deacylates mischarged D-aminoacyl-tRNAs. Also deacylates mischarged glycyl-tRNA(Ala), protecting cells against glycine mischarging by AlaRS. Acts via tRNA-based rather than protein-based catalysis; rejects L-amino acids rather than detecting D-amino acids in the active site. By recycling D-aminoacyl-tRNA to D-amino acids and free tRNA molecules, this enzyme counteracts the toxicity associated with the formation of D-aminoacyl-tRNA entities in vivo and helps enforce protein L-homochirality. This is D-aminoacyl-tRNA deacylase from Bacillus thuringiensis (strain Al Hakam).